Consider the following 102-residue polypeptide: MIHKLTSEERKTRLEGLPHWTAVPGRDAIQRSLRFADFNEAFGFMTRVAIKAQEMNHHPEWFNVYNRVDVTLSTHDADGLTERDIELAQFIDRVCAHTLPAA.

The protein belongs to the pterin-4-alpha-carbinolamine dehydratase family.

It carries out the reaction (4aS,6R)-4a-hydroxy-L-erythro-5,6,7,8-tetrahydrobiopterin = (6R)-L-erythro-6,7-dihydrobiopterin + H2O. The protein is Putative pterin-4-alpha-carbinolamine dehydratase of Burkholderia vietnamiensis (strain G4 / LMG 22486) (Burkholderia cepacia (strain R1808)).